The primary structure comprises 230 residues: N-(5'-phosphoribosyl)anthranilate isomerase (230 aa).

This sequence belongs to the TrpF family.

The enzyme catalyses N-(5-phospho-beta-D-ribosyl)anthranilate = 1-(2-carboxyphenylamino)-1-deoxy-D-ribulose 5-phosphate. It functions in the pathway amino-acid biosynthesis; L-tryptophan biosynthesis; L-tryptophan from chorismate: step 3/5. This chain is N-(5'-phosphoribosyl)anthranilate isomerase, found in Syntrophus aciditrophicus (strain SB).